We begin with the raw amino-acid sequence, 341 residues long: Phenylalanine--tRNA ligase alpha subunit (341 aa).

Glu252 contributes to the Mg(2+) binding site.

Belongs to the class-II aminoacyl-tRNA synthetase family. Phe-tRNA synthetase alpha subunit type 1 subfamily. As to quaternary structure, tetramer of two alpha and two beta subunits. It depends on Mg(2+) as a cofactor.

It localises to the cytoplasm. It catalyses the reaction tRNA(Phe) + L-phenylalanine + ATP = L-phenylalanyl-tRNA(Phe) + AMP + diphosphate + H(+). The polypeptide is Phenylalanine--tRNA ligase alpha subunit (Malacoplasma penetrans (strain HF-2) (Mycoplasma penetrans)).